The chain runs to 57 residues: Potassium channel toxin alpha-KTx 8.7 (57 aa).

The first 28 residues, 1–28 (MSRLYAIILIALVFNVIMTIMPDMKVEA), serve as a signal peptide directing secretion. 3 disulfides stabilise this stretch: C31-C47, C34-C52, and C38-C54.

In terms of tissue distribution, expressed by the venom gland.

The protein localises to the secreted. In terms of biological role, inhibits voltage-gated potassium channel rKv1.1/KCNA1 at nanomolar ranges (IC(50)=8.5 nM). In Mesobuthus eupeus (Lesser Asian scorpion), this protein is Potassium channel toxin alpha-KTx 8.7.